A 502-amino-acid polypeptide reads, in one-letter code: Lysine--tRNA ligase (502 aa).

Mg(2+) contacts are provided by Glu-413 and Glu-420.

This sequence belongs to the class-II aminoacyl-tRNA synthetase family. As to quaternary structure, homodimer. Mg(2+) serves as cofactor.

The protein localises to the cytoplasm. The catalysed reaction is tRNA(Lys) + L-lysine + ATP = L-lysyl-tRNA(Lys) + AMP + diphosphate. The polypeptide is Lysine--tRNA ligase (Aromatoleum aromaticum (strain DSM 19018 / LMG 30748 / EbN1) (Azoarcus sp. (strain EbN1))).